The sequence spans 1274 residues: DENN domain-containing protein 3 (1274 aa).

A disordered region spans residues 65–108 (GQVPGASCALGKGRRRSFRKKREKPRMEPWKSHPGDSKGPDSED). The region spanning 75 to 245 (GKGRRRSFRK…LIPSPPPGPL (171 aa)) is the uDENN domain. Over residues 76–88 (KGRRRSFRKKREK) the composition is skewed to basic residues. A compositionally biased stretch (basic and acidic residues) spans 89–105 (PRMEPWKSHPGDSKGPD). The cDENN domain maps to 268 to 400 (IVDLDLHLPL…PLLLAQTFIQ (133 aa)). The dDENN domain maps to 402-506 (VQSLQLHPDL…KARLNGRMDA (105 aa)). A linker region spans residues 520-970 (RIDRMLISPR…KHKINPSAGE (451 aa)). Residues S554 and S572 each carry the phosphoserine; by ULK1 modification. Y940 bears the Phosphotyrosine mark. WD repeat units lie at residues 975–1013 (AIEVLLYTPGRLDPAEKVEDAHPKLWCALNEGKVVVFDA), 1019–1055 (HQHCFKVGSSKVNCMVMAEHNQVWVGSEDSVIYIINV), 1059–1099 (SCNK…AWNV), 1103–1140 (RVISRFQLSYGDLLSISLHNDRIWCCTVHKILVVTPQG), 1146–1181 (LKHPKDASFLAFQLLPEEQQLWAASTGVSELYMWSL), 1186–1228 (QPPQ…IYVM), and 1234–1273 (TVEKELVAHLDTVRTLCSAEDRYVLSGAGQEEGKIAIWKV).

In terms of assembly, forms oligomers. Interacts with 6 of the 7 known isoforms of 14-3-3 proteins.

The protein resides in the cytoplasm. Its function is as follows. Guanine nucleotide exchange factor (GEF) activating Rab12. Promotes the exchange of GDP to GTP, converting inactive GDP-bound Rab12 into its active GTP-bound form. Regulates autophagy in response to starvation through Rab12 activation. Starvation leads to ULK1/2-dependent phosphorylation of Ser-554 and Ser-572, which in turn allows recruitment of 14-3-3 adapter proteins and leads to up-regulation of GEF activity towards Rab12. Also plays a role in protein transport from recycling endosomes to lysosomes, regulating, for instance, the degradation of the transferrin receptor and of the amino acid transporter PAT4. Starvation also induces phosphorylation at Tyr-940, which leads to up-regulated GEF activity and initiates autophagy. This Mus musculus (Mouse) protein is DENN domain-containing protein 3 (Dennd3).